Consider the following 117-residue polypeptide: MIGPLGVSGFKTSLDIDTTEAADTAKGSMSLVGLSSIDATSPSAALVCPSGSVVLVSLKESGCATFIFLCEGSSLFIMSSGCFLIASLSCVGLTVFETLFSLVFDTAYFICGMVIQL.

The chain crosses the membrane as a helical span at residues 76 to 96 (FIMSSGCFLIASLSCVGLTVF).

It localises to the membrane. This is an uncharacterized protein from Saccharomyces cerevisiae (strain ATCC 204508 / S288c) (Baker's yeast).